The sequence spans 403 residues: MEKGEVASLRCRLLLLLLLLTLPPTHQGRTLRHIDPIQSAQDSPAKYLSNGPGQEPVTVLTIDLTKISKPSSSFEFRTWDPEGVIFYGDTNTEDDWFMLGLRDGQLEIQLHNLWARLTVGFGPRLNDGRWHPVELKMNGDSLLLWVDGKEMLCLRQVSASLADHPQLSMRIALGGLLLPTSKLRFPLVPALDGCIRRDIWLGHQAQLSTSARTSLGNCDVDLQPGLFFPPGTHAEFSLQDIPQPHTDPWTFSLELGFKLVDGAGRLLTLGTGTNSSWLTLHLQDQTVVLSSEAEPKLALPLAVGLPLQLKLDVFKVALSQGPKMEVLSTSLLRLASLWRLWSHPQGHLSLGALPGEDSSASFCLSDLWVQGQRLDIDKALSRSQDIWTHSCPQSPSNDTHTSH.

Positions 1 to 30 (MEKGEVASLRCRLLLLLLLLTLPPTHQGRT) are cleaved as a signal peptide. Laminin G-like domains lie at 46–218 (KYLS…LGNC) and 225–391 (GLFF…THSC). Residues C194 and C218 are joined by a disulfide bond. A glycan (N-linked (GlcNAc...) asparagine) is linked at N274. A disulfide bridge links C363 with C391. The N-linked (GlcNAc...) asparagine glycan is linked to N397.

Homodimer. Isoform 2 is only expressed in the liver.

The protein resides in the secreted. Its function is as follows. Functions as an androgen transport protein, but may also be involved in receptor mediated processes. Each dimer binds one molecule of steroid. Specific for 5-alpha-dihydrotestosterone, testosterone, and 17-beta-estradiol. Regulates the plasma metabolic clearance rate of steroid hormones by controlling their plasma concentration. The protein is Sex hormone-binding globulin (Shbg) of Rattus norvegicus (Rat).